The following is a 180-amino-acid chain: Signal peptidase complex subunit 3 (180 aa).

Residues M1–L11 are Cytoplasmic-facing. A helical; Signal-anchor for type II membrane protein transmembrane segment spans residues F12–F32. The Lumenal portion of the chain corresponds to K33–Y180. An N-linked (GlcNAc...) asparagine glycan is attached at N141.

This sequence belongs to the SPCS3 family. In terms of assembly, component of the signal peptidase complex paralog A (SPC-A) composed of a catalytic subunit SEC11A and three accessory subunits SPCS1, SPCS2 and SPCS3. Component of the signal peptidase complex paralog C (SPC-C) composed of a catalytic subunit SEC11C and three accessory subunits SPCS1, SPCS2 and SPCS3. The complex induces a local thinning of the ER membrane which is used to measure the length of the signal peptide (SP) h-region of protein substrates. This ensures the selectivity of the complex towards h-regions shorter than 18-20 amino acids. As to expression, expressed in hen oviduct (at protein level).

It localises to the endoplasmic reticulum membrane. In terms of biological role, essential component of the signal peptidase complex (SPC) which catalyzes the cleavage of N-terminal signal sequences from nascent proteins as they are translocated into the lumen of the endoplasmic reticulum. Essential for the SPC catalytic activity, possibly by stabilizing and positioning the active center of the complex close to the lumenal surface. The sequence is that of Signal peptidase complex subunit 3 from Gallus gallus (Chicken).